A 299-amino-acid chain; its full sequence is MSGFVEKPEPLQVPGLVHLHTGKVRDLYQNEAGDLVMVASDRLSAFDWVLPTEIPDKGRVLTQLSLWWFDRLVDLAPNHVLSTELPPGAPADWQGRTLICKSLKMEPVECVARGYLTGSGLVEYNETRTVCGLALPEGLVDGSELPGPIFTPATKAAVGEHDENVSYEEVARQVGAETAAKLRQTTLAVYARARDIARRRGIILADTKFEFGFDGDTLVLADEVLTPDSSRFWPADQWEPGRAQPSFDKQFVRDWLTSPESGWDRKSEQPPPPLPQHVVDATRAKYVEAYERLTGANWS.

The tract at residues 259-279 (PESGWDRKSEQPPPPLPQHVV) is disordered.

This sequence belongs to the SAICAR synthetase family.

The enzyme catalyses 5-amino-1-(5-phospho-D-ribosyl)imidazole-4-carboxylate + L-aspartate + ATP = (2S)-2-[5-amino-1-(5-phospho-beta-D-ribosyl)imidazole-4-carboxamido]succinate + ADP + phosphate + 2 H(+). It participates in purine metabolism; IMP biosynthesis via de novo pathway; 5-amino-1-(5-phospho-D-ribosyl)imidazole-4-carboxamide from 5-amino-1-(5-phospho-D-ribosyl)imidazole-4-carboxylate: step 1/2. The polypeptide is Phosphoribosylaminoimidazole-succinocarboxamide synthase (Streptomyces avermitilis (strain ATCC 31267 / DSM 46492 / JCM 5070 / NBRC 14893 / NCIMB 12804 / NRRL 8165 / MA-4680)).